Reading from the N-terminus, the 298-residue chain is Acetylglutamate kinase (298 aa).

Residues 69–70 (GG), arginine 91, and asparagine 196 each bind substrate.

This sequence belongs to the acetylglutamate kinase family. ArgB subfamily.

Its subcellular location is the cytoplasm. The catalysed reaction is N-acetyl-L-glutamate + ATP = N-acetyl-L-glutamyl 5-phosphate + ADP. It participates in amino-acid biosynthesis; L-arginine biosynthesis; N(2)-acetyl-L-ornithine from L-glutamate: step 2/4. Functionally, catalyzes the ATP-dependent phosphorylation of N-acetyl-L-glutamate. The polypeptide is Acetylglutamate kinase (Rhodopseudomonas palustris (strain BisB5)).